The following is a 262-amino-acid chain: Phosphatidylserine decarboxylase proenzyme (262 aa).

Residues D86, H142, and S226 each act as charge relay system; for autoendoproteolytic cleavage activity in the active site. S226 (schiff-base intermediate with substrate; via pyruvic acid; for decarboxylase activity) is an active-site residue. Pyruvic acid (Ser); by autocatalysis is present on S226.

This sequence belongs to the phosphatidylserine decarboxylase family. PSD-B subfamily. Prokaryotic type I sub-subfamily. As to quaternary structure, heterodimer of a large membrane-associated beta subunit and a small pyruvoyl-containing alpha subunit. The cofactor is pyruvate. Is synthesized initially as an inactive proenzyme. Formation of the active enzyme involves a self-maturation process in which the active site pyruvoyl group is generated from an internal serine residue via an autocatalytic post-translational modification. Two non-identical subunits are generated from the proenzyme in this reaction, and the pyruvate is formed at the N-terminus of the alpha chain, which is derived from the carboxyl end of the proenzyme. The autoendoproteolytic cleavage occurs by a canonical serine protease mechanism, in which the side chain hydroxyl group of the serine supplies its oxygen atom to form the C-terminus of the beta chain, while the remainder of the serine residue undergoes an oxidative deamination to produce ammonia and the pyruvoyl prosthetic group on the alpha chain. During this reaction, the Ser that is part of the protease active site of the proenzyme becomes the pyruvoyl prosthetic group, which constitutes an essential element of the active site of the mature decarboxylase.

The protein resides in the cell membrane. The enzyme catalyses a 1,2-diacyl-sn-glycero-3-phospho-L-serine + H(+) = a 1,2-diacyl-sn-glycero-3-phosphoethanolamine + CO2. The protein operates within phospholipid metabolism; phosphatidylethanolamine biosynthesis; phosphatidylethanolamine from CDP-diacylglycerol: step 2/2. Catalyzes the formation of phosphatidylethanolamine (PtdEtn) from phosphatidylserine (PtdSer). The polypeptide is Phosphatidylserine decarboxylase proenzyme (Bacillus cereus (strain ATCC 10987 / NRS 248)).